The chain runs to 362 residues: MNASAASLNDSQVVVVAAEGAAAAATAAGGPDTGEWGPPAAAALGAGGGANGSLELSSQLSAGPPGLLLPAVNPWDVLLCVSGTVIAGENALVVALIASTPALRTPMFVLVGSLATADLLAGCGLILHFVFQYLVPSETVSLLTVGFLVASFAASVSSLLAITVDRYLSLYNALTYYSRRTLLGVHLLLAATWTVSLGLGLLPVLGWNCLAERAACSVVRPLARSHVALLSAAFFMVFGIMLHLYVRICQVVWRHAHQIALQQHCLAPPHLAATRKGVGTLAVVLGTFGASWLPFAIYCVVGSHEDPAVYTYATLLPATYNSMINPIIYAFRNQEIQRALWLLLCGCFQSKVPFRSRSPSEV.

Over Met1 to Pro74 the chain is Extracellular. Asn2, Asn9, and Asn51 each carry an N-linked (GlcNAc...) asparagine glycan. The helical transmembrane segment at Trp75–Val94 threads the bilayer. Topologically, residues Ala95–Pro106 are cytoplasmic. A helical membrane pass occupies residues Met107–Val130. Residues Phe131–Leu142 lie on the Extracellular side of the membrane. A helical membrane pass occupies residues Leu143–Val164. Over Asp165 to Val185 the chain is Cytoplasmic. Residues His186 to Leu205 traverse the membrane as a helical segment. Over Gly206–Leu230 the chain is Extracellular. The helical transmembrane segment at Ser231–Cys249 threads the bilayer. Topologically, residues Gln250–Gly277 are cytoplasmic. The helical transmembrane segment at Val278–His304 threads the bilayer. Topologically, residues Glu305 to Val309 are extracellular. The helical transmembrane segment at Tyr310–Phe331 threads the bilayer. The Cytoplasmic portion of the chain corresponds to Arg332–Val362. Cys345 carries the S-palmitoyl cysteine lipid modification. Phosphoserine occurs at positions 356, 358, and 360.

The protein belongs to the G-protein coupled receptor 1 family.

It is found in the cell membrane. Functionally, orphan receptor with constitutive G(s) signaling activity that activate cyclic AMP. Promotes neurite outgrowth and blocks myelin inhibition in neurons. This is G-protein coupled receptor 6 (GPR6) from Homo sapiens (Human).